A 370-amino-acid polypeptide reads, in one-letter code: Histidinol-phosphate aminotransferase 1 (370 aa).

Lys222 carries the post-translational modification N6-(pyridoxal phosphate)lysine.

Belongs to the class-II pyridoxal-phosphate-dependent aminotransferase family. Histidinol-phosphate aminotransferase subfamily. In terms of assembly, homodimer. Pyridoxal 5'-phosphate is required as a cofactor.

It carries out the reaction L-histidinol phosphate + 2-oxoglutarate = 3-(imidazol-4-yl)-2-oxopropyl phosphate + L-glutamate. It participates in amino-acid biosynthesis; L-histidine biosynthesis; L-histidine from 5-phospho-alpha-D-ribose 1-diphosphate: step 7/9. This Bacillus cereus (strain ZK / E33L) protein is Histidinol-phosphate aminotransferase 1.